Here is a 548-residue protein sequence, read N- to C-terminus: Natural resistance-associated macrophage protein 1 (548 aa).

The segment covering 1–11 (MSGDTGPSKQG) has biased composition (polar residues). Residues 1-38 (MSGDTGPSKQGGTRYGSISSPPSPGPQQAPPGGTYLGE) form a disordered region. Residues 1–55 (MSGDTGPSKQGGTRYGSISSPPSPGPQQAPPGGTYLGEKIPIPDTESGAFSLRKL) are Cytoplasmic-facing. The helical transmembrane segment at 56–73 (WAFTGPGFLMSIAFLDPG) threads the bilayer. Residues 74-82 (NIESDLQAG) are Extracellular-facing. A helical membrane pass occupies residues 83–102 (AVAGFKLLWVLLWATVLGLL). Over 103-139 (CQRLAARLGVVTGKDLGEVCHLYYPKVPRILLWLTIE) the chain is Cytoplasmic. The helical transmembrane segment at 140–160 (LAIVGSDMQEVIGTAIAFSLL) threads the bilayer. The Extracellular segment spans residues 161–164 (SAGR). A helical transmembrane segment spans residues 165–184 (IPLWGGVLITVVDTFFFLFL). The Cytoplasmic segment spans residues 185–193 (DNYGLRKLE). A helical transmembrane segment spans residues 194-214 (AFFGFLITIMALTFGYEYVVA). The Extracellular portion of the chain corresponds to 215–237 (QPAQGALLQGLFLPSCRGCGQPE). Residues 238–256 (LLQAVGIIGAIIMPHNIYL) traverse the membrane as a helical segment. Topologically, residues 257-284 (HSSLVKSREVDRSRRADIREANMYFLIE) are cytoplasmic. Residues 285-304 (ATIALSVSFLINLFVMAVFG) traverse the membrane as a helical segment. The Extracellular portion of the chain corresponds to 305 to 346 (QAFYKQTNQAAFNICAKSSLHDYAPIFPRNNLTVAVDIYQGG). An N-linked (GlcNAc...) asparagine glycan is attached at N335. Residues 347–366 (VILGCLFGPAALYIWAVGLL) traverse the membrane as a helical segment. Over 367–397 (AAGQSSTMTGTYAGQFVMEGFLKLRWSRFAR) the chain is Cytoplasmic. The chain crosses the membrane as a helical span at residues 398–415 (VLLTRSCAILPTVLLAVF). Topologically, residues 416-426 (RDLRDLSGLND) are extracellular. Residues 427–447 (LLNVLQSLLLPFAVLPILTFT) traverse the membrane as a helical segment. The Cytoplasmic portion of the chain corresponds to 448 to 463 (SMPALMQEFANGLVSK). The helical transmembrane segment at 464 to 485 (VITSSIMVLVCAVNLYFVISYV) threads the bilayer. The Extracellular segment spans residues 486–493 (PSLPHPAY). Residues 494–513 (FSLVALLAAAYLGLTTYLVW) traverse the membrane as a helical segment. At 514-548 (TCLITQGATFLAHNSHQRFLYGLPEEDQEKGRTSG) the chain is on the cytoplasmic side.

Belongs to the NRAMP family.

Its subcellular location is the late endosome membrane. It localises to the lysosome membrane. The enzyme catalyses Zn(2+)(in) + H(+)(out) = Zn(2+)(out) + H(+)(in). It carries out the reaction Fe(2+)(in) + H(+)(out) = Fe(2+)(out) + H(+)(in). The catalysed reaction is Mn(2+)(in) + H(+)(out) = Mn(2+)(out) + H(+)(in). Its function is as follows. Macrophage-specific antiporter that fluxes metal ions in either direction against a proton gradient. Localized to late endosomal lysosomal membranes, delivers bivalent cations from the cytosol into these acidic compartments where they may directly affect antimicrobial activity. Involved in iron metabolism and host natural resistance to infection with intracellular parasites. Pathogen resistance involves sequestration of Fe(2+) and Mn(2+), cofactors of both prokaryotic and eukaryotic catalases and superoxide dismutases, not only to protect the macrophage against its own generation of reactive oxygen species, but to deny the cations to the pathogen for synthesis of its protective enzymes. This chain is Natural resistance-associated macrophage protein 1 (SLC11A1), found in Bubalus bubalis (Domestic water buffalo).